A 262-amino-acid polypeptide reads, in one-letter code: Intron-encoded DNA endonuclease ai2b (262 aa).

It belongs to the LAGLIDADG endonuclease family.

Its subcellular location is the mitochondrion. Its function is as follows. Mitochondrial DNA endonuclease involved in intron homing. This is Intron-encoded DNA endonuclease ai2b (ai2b) from Dictyostelium discoideum (Social amoeba).